The primary structure comprises 213 residues: Large ribosomal subunit protein uL3 (213 aa).

Residue Q151 is modified to N5-methylglutamine.

This sequence belongs to the universal ribosomal protein uL3 family. In terms of assembly, part of the 50S ribosomal subunit. Forms a cluster with proteins L14 and L19. Methylated by PrmB.

One of the primary rRNA binding proteins, it binds directly near the 3'-end of the 23S rRNA, where it nucleates assembly of the 50S subunit. This is Large ribosomal subunit protein uL3 from Allorhizobium ampelinum (strain ATCC BAA-846 / DSM 112012 / S4) (Agrobacterium vitis (strain S4)).